We begin with the raw amino-acid sequence, 512 residues long: Glycerol kinase 2 (512 aa).

Thr18 contacts ADP. Residues Thr18, Thr19, and Ser20 each contribute to the ATP site. Thr18 lines the sn-glycerol 3-phosphate pocket. Residue Arg22 coordinates ADP. Sn-glycerol 3-phosphate is bound by residues Arg88, Glu89, Tyr140, and Asp255. Glycerol-binding residues include Arg88, Glu89, Tyr140, Asp255, and Gln256. ADP is bound by residues Thr277 and Gly321. ATP contacts are provided by Thr277, Gly321, Gln325, and Gly422. The ADP site is built by Gly422 and Asn426.

The protein belongs to the FGGY kinase family.

The catalysed reaction is glycerol + ATP = sn-glycerol 3-phosphate + ADP + H(+). It participates in polyol metabolism; glycerol degradation via glycerol kinase pathway; sn-glycerol 3-phosphate from glycerol: step 1/1. With respect to regulation, inhibited by fructose 1,6-bisphosphate (FBP). Key enzyme in the regulation of glycerol uptake and metabolism. Catalyzes the phosphorylation of glycerol to yield sn-glycerol 3-phosphate. This Streptomyces coelicolor (strain ATCC BAA-471 / A3(2) / M145) protein is Glycerol kinase 2.